Reading from the N-terminus, the 274-residue chain is Rhamnulose-1-phosphate aldolase (274 aa).

Glu-117 is a catalytic residue. Positions 141, 143, and 212 each coordinate Zn(2+).

The protein belongs to the aldolase class II family. RhaD subfamily. In terms of assembly, homotetramer. Zn(2+) serves as cofactor.

The protein resides in the cytoplasm. It catalyses the reaction L-rhamnulose 1-phosphate = (S)-lactaldehyde + dihydroxyacetone phosphate. Its pathway is carbohydrate degradation; L-rhamnose degradation; glycerone phosphate from L-rhamnose: step 3/3. Catalyzes the reversible cleavage of L-rhamnulose-1-phosphate to dihydroxyacetone phosphate (DHAP) and L-lactaldehyde. The chain is Rhamnulose-1-phosphate aldolase from Escherichia coli O17:K52:H18 (strain UMN026 / ExPEC).